The following is a 107-amino-acid chain: Putative double-stranded DNA mimic protein ECA2319 (107 aa).

This sequence belongs to the putative dsDNA mimic protein family.

Its function is as follows. May act as a double-stranded DNA (dsDNA) mimic. Probably regulates the activity of a dsDNA-binding protein. This is Putative double-stranded DNA mimic protein ECA2319 from Pectobacterium atrosepticum (strain SCRI 1043 / ATCC BAA-672) (Erwinia carotovora subsp. atroseptica).